The following is a 428-amino-acid chain: Light-independent protochlorophyllide reductase subunit N (428 aa).

Residues Cys31, Cys56, and Cys117 each contribute to the [4Fe-4S] cluster site.

It belongs to the BchN/ChlN family. As to quaternary structure, protochlorophyllide reductase is composed of three subunits; BchL, BchN and BchB. Forms a heterotetramer of two BchB and two BchN subunits. It depends on [4Fe-4S] cluster as a cofactor.

It carries out the reaction chlorophyllide a + oxidized 2[4Fe-4S]-[ferredoxin] + 2 ADP + 2 phosphate = protochlorophyllide a + reduced 2[4Fe-4S]-[ferredoxin] + 2 ATP + 2 H2O. The protein operates within porphyrin-containing compound metabolism; bacteriochlorophyll biosynthesis (light-independent). Component of the dark-operative protochlorophyllide reductase (DPOR) that uses Mg-ATP and reduced ferredoxin to reduce ring D of protochlorophyllide (Pchlide) to form chlorophyllide a (Chlide). This reaction is light-independent. The NB-protein (BchN-BchB) is the catalytic component of the complex. The chain is Light-independent protochlorophyllide reductase subunit N from Rhodopseudomonas palustris (strain BisB18).